A 248-amino-acid chain; its full sequence is Protein-lysine N-methyltransferase EFM5 (248 aa).

Belongs to the class I-like SAM-binding methyltransferase superfamily. EFM5 family.

Its subcellular location is the cytoplasm. S-adenosyl-L-methionine-dependent protein-lysine N-methyltransferase that trimethylates elongation factor 1-alpha (TEF1 and TEF2) at 'Lys-79'. Required for replication of Brome mosaic virus (BMV). This chain is Protein-lysine N-methyltransferase EFM5, found in Saccharomyces cerevisiae (strain ATCC 204508 / S288c) (Baker's yeast).